The sequence spans 399 residues: Elongation factor Tu 1 (399 aa).

Residues 17–208 (KPHVNVGTIG…LDDYVEVPPR (192 aa)) enclose the tr-type G domain. The interval 26–33 (GHVDHGKT) is G1. 26-33 (GHVDHGKT) serves as a coordination point for GTP. A Mg(2+)-binding site is contributed by threonine 33. Residues 62–66 (GITIA) form a G2 region. Residues 83–86 (DCPG) are G3. GTP contacts are provided by residues 83–87 (DCPGH) and 138–141 (NKAD). Residues 138 to 141 (NKAD) form a G4 region. The G5 stretch occupies residues 175 to 177 (SAL).

Belongs to the TRAFAC class translation factor GTPase superfamily. Classic translation factor GTPase family. EF-Tu/EF-1A subfamily. Monomer.

Its subcellular location is the cytoplasm. The enzyme catalyses GTP + H2O = GDP + phosphate + H(+). GTP hydrolase that promotes the GTP-dependent binding of aminoacyl-tRNA to the A-site of ribosomes during protein biosynthesis. In Wolbachia sp. subsp. Brugia malayi (strain TRS), this protein is Elongation factor Tu 1.